A 63-amino-acid polypeptide reads, in one-letter code: Potassium channel toxin MeuTXKalpha4 (63 aa).

The signal sequence occupies residues methionine 1–glycine 28. Intrachain disulfides connect cysteine 35–cysteine 53, cysteine 39–cysteine 59, and cysteine 43–cysteine 61.

The protein belongs to the short scorpion toxin superfamily. Potassium channel inhibitor family. As to expression, expressed by the venom gland.

It is found in the secreted. Functionally, may block voltage-gated potassium channels (Kv). This Mesobuthus eupeus (Lesser Asian scorpion) protein is Potassium channel toxin MeuTXKalpha4.